The sequence spans 265 residues: Methyl-coenzyme M reductase II subunit gamma (265 aa).

Coenzyme M is bound at residue Arg-123.

The protein belongs to the methyl-coenzyme M reductase gamma subunit family. As to quaternary structure, MCR is a hexamer of two alpha, two beta, and two gamma chains, forming a dimer of heterotrimers. It depends on coenzyme F430 as a cofactor.

It catalyses the reaction coenzyme B + methyl-coenzyme M = methane + coenzyme M-coenzyme B heterodisulfide. It functions in the pathway one-carbon metabolism; methyl-coenzyme M reduction; methane from methyl-coenzyme M: step 1/1. Functionally, component of the methyl-coenzyme M reductase (MCR) I that catalyzes the reductive cleavage of methyl-coenzyme M (CoM-S-CH3 or 2-(methylthio)ethanesulfonate) using coenzyme B (CoB or 7-mercaptoheptanoylthreonine phosphate) as reductant which results in the production of methane and the mixed heterodisulfide of CoB and CoM (CoM-S-S-CoB). This is the final step in methanogenesis. This chain is Methyl-coenzyme M reductase II subunit gamma (mrtG), found in Methanothermobacter marburgensis (strain ATCC BAA-927 / DSM 2133 / JCM 14651 / NBRC 100331 / OCM 82 / Marburg) (Methanobacterium thermoautotrophicum).